Reading from the N-terminus, the 1938-residue chain is Myosin-6 (1938 aa).

A Myosin N-terminal SH3-like domain is found at 32–81 (DIRTECFVPDDKEEYVKAKVVSREGGKVTAETENGKTVTIKEDQVMQQNP). Positions 85-780 (DKIEDMAMLT…LLGLLEEMRD (696 aa)) constitute a Myosin motor domain. N6,N6,N6-trimethyllysine is present on K129. 178–185 (GESGAGKT) serves as a coordination point for ATP. A Phosphothreonine modification is found at T379. A Phosphoserine modification is found at S417. 2 actin-binding regions span residues 657 to 679 (LNKL…IPNE) and 759 to 773 (KFGH…GLLG). Residues 783-812 (LSRIITRIQAQARGQLMRIEFKKIVERRDA) form the IQ domain. Calmodulin-binding regions lie at residues 790-807 (IQAQ…KKIV) and 816-833 (IQWN…PWMK). The stretch at 842–1938 (LKSAETEKEM…IGAKKMHDEE (1097 aa)) forms a coiled coil. Phosphoserine is present on residues S1090 and S1139. The residue at position 1261 (Y1261) is a Phosphotyrosine. Phosphoserine is present on S1271. 2 positions are modified to phosphothreonine: T1277 and T1284. Residue S1309 is modified to Phosphoserine. Residue Y1310 is modified to Phosphotyrosine. Position 1311 is a phosphothreonine (T1311). At S1512 the chain carries Phosphoserine. At T1515 the chain carries Phosphothreonine. The tract at residues 1909-1938 (EERADIAESQVNKLRAKSRDIGAKKMHDEE) is disordered. Residues 1925-1938 (KSRDIGAKKMHDEE) show a composition bias toward basic and acidic residues.

The protein belongs to the TRAFAC class myosin-kinesin ATPase superfamily. Myosin family. In terms of assembly, muscle myosin is a hexameric protein that consists of 2 heavy chain subunits (MHC), 2 alkali light chain subunits (MLC) and 2 regulatory light chain subunits (MLC-2).

It is found in the cytoplasm. Its subcellular location is the myofibril. Its function is as follows. Muscle contraction. The chain is Myosin-6 (Myh6) from Mus musculus (Mouse).